The chain runs to 50 residues: Protein hunchback (50 aa).

C2H2-type zinc fingers lie at residues 1–5, 11–33, and 39–50; these read HLRNH, FKCG…MKSH, and YRCANCCYATKY.

It belongs to the hunchback C2H2-type zinc-finger protein family.

The protein localises to the nucleus. Its function is as follows. Gap class segmentation protein that controls development of head structures. In Pholcus phalangioides (Longbodied cellar spider), this protein is Protein hunchback (hb).